The sequence spans 404 residues: Snake venom metalloproteinase H5 (404 aa).

An N-terminal signal peptide occupies residues 1–6 (FPYQGS). A propeptide spanning residues 7-177 (SIMLESGKVN…KPSWVNLTPK (171 aa)) is cleaved from the precursor. Residues 184–379 (TSVNLQLVVD…KKPKCIHKKS (196 aa)) enclose the Peptidase M12B domain. 3 disulfides stabilise this stretch: Cys-295–Cys-374, Cys-336–Cys-358, and Cys-338–Cys-341. His-320 lines the Zn(2+) pocket. Residue Glu-321 is part of the active site. Positions 324 and 330 each coordinate Zn(2+). Positions 379 to 404 (SLKTDTVSTSVSGNEPLDDNVDGFHA) are excised as a propeptide. The interval 385 to 404 (VSTSVSGNEPLDDNVDGFHA) is disordered. Acidic residues predominate over residues 394–404 (PLDDNVDGFHA).

In terms of assembly, monomer. Zn(2+) is required as a cofactor. As to expression, expressed by the venom gland.

It localises to the secreted. Its function is as follows. This probable venom zinc protease is not hemorrhagic when 3 ug are injected onto the back skin of guinea pig. In Deinagkistrodon acutus (Hundred-pace snake), this protein is Snake venom metalloproteinase H5.